Consider the following 341-residue polypeptide: MNNLIKYSTFLISDLFDVVIGKTIDGNKAQRNENGTPYITRKATRNGFEFMIDGEKEKLYSGKLPVITIGNETSKPFVQEFHFFTGTKVNICIPKLDLNRNHLLYITTMIENATKMFSYSYTINSTRLKSLKILLPIKGEEPDWDYMNTYISKILSNMEKNFDVQQNDGVSDLRSLKDLSWSQFKMDEIFSINSGVRLTKADMKPGNIPFIGATDSNNGITEFTSSTNASFDGNVLGVNYNGSVVENFYHPYKAVFSDDVKRLKLKNYPNNKHVLLFMKVVILQQKVKYAYGYKFNATRMKEQIILLPTKADGTPDYEFMEQYMMRMENKVVGRTTEKEAD.

It belongs to the type-I restriction system S methylase family. As to quaternary structure, heterotrimer of two A and one B subunit. Both subunits are necessary for DNA-binding, which is sequence non-specific. Mg(2+) is required as a cofactor.

The catalysed reaction is Endonucleolytic cleavage of DNA to give specific double-stranded fragments with terminal 5'-phosphates.. Its activity is regulated as follows. DNA restriction requires S-adenosyl-L-methionine and Mg(2+), and is inhibited by S-adenosyl-homocysteine. SAM may be a cofactor for DNA restriction. The specificity subunit. A B, G, H and S subtype restriction enzyme that recognizes the double-stranded sequence 5'-CGAN(6)TGC-3' and cleaves bilaterally and symmetrically 10 base pairs upstream and 12 base pairs downstream of the sequence to release a 34-base pair fragment. Methylation of the recognition sequence occurs on the adenine in either one or both strands; seems to methylate restricted DNA. This subunit degrades DNA in a non-specific manner. The protein is Type II restriction enzyme BgcI specificity subunit S.BcgI of Heyndrickxia coagulans (Weizmannia coagulans).